A 161-amino-acid polypeptide reads, in one-letter code: MQDAITSVINTADVQGKYLDDSSLNKLKGYFATGELRVRAAATIAANAANIIKESVAKALLYSDITRPGGNMYTTRRFAACIRDLDYYLRLATYGMLAGDPSILDERVLDGLKETYNSLGVPIGATIQAIQAMKEVTSGLLGVDAGQEMALYFDYICSGLS.

N4-methylasparagine is present on Asn-71. Cys-81 contacts (2R,3E)-phycocyanobilin.

The protein belongs to the phycobiliprotein family. As to quaternary structure, heterodimer of an alpha and a beta chain. Contains one covalently linked phycocyanobilin chromophore.

It localises to the plastid. The protein localises to the chloroplast thylakoid membrane. Its function is as follows. Light-harvesting photosynthetic bile pigment-protein from the phycobiliprotein complex. Allophycocyanin has a maximum absorption at approximately 650 nanometers. In Aglaothamnion neglectum (Red alga), this protein is Allophycocyanin beta chain (apcB).